The sequence spans 65 residues: Large ribosomal subunit protein bL35 (65 aa).

Residues Met1–Lys26 form a disordered region.

The protein belongs to the bacterial ribosomal protein bL35 family.

The protein is Large ribosomal subunit protein bL35 of Clostridium novyi (strain NT).